The chain runs to 130 residues: Glycine cleavage system H protein (130 aa).

The 83-residue stretch at 24–106 (IYSVGITEHA…YTDGWLFRIK (83 aa)) folds into the Lipoyl-binding domain. K65 is modified (N6-lipoyllysine).

The protein belongs to the GcvH family. The glycine cleavage system is composed of four proteins: P, T, L and H. Requires (R)-lipoate as cofactor.

Functionally, the glycine cleavage system catalyzes the degradation of glycine. The H protein shuttles the methylamine group of glycine from the P protein to the T protein. This is Glycine cleavage system H protein from Pectobacterium atrosepticum (strain SCRI 1043 / ATCC BAA-672) (Erwinia carotovora subsp. atroseptica).